The chain runs to 558 residues: Glutamine--tRNA ligase (558 aa).

The 'HIGH' region signature appears at 36-46 (PEPNGYLHLGH). ATP contacts are provided by residues 37–39 (EPN) and 43–49 (HLGHAKS). L-glutamine is bound by residues Asp69 and Tyr214. ATP is bound by residues Thr233, 263-264 (RL), and 271-273 (LSK). Positions 270–274 (LLSKR) match the 'KMSKS' region motif.

This sequence belongs to the class-I aminoacyl-tRNA synthetase family. Monomer.

Its subcellular location is the cytoplasm. The enzyme catalyses tRNA(Gln) + L-glutamine + ATP = L-glutaminyl-tRNA(Gln) + AMP + diphosphate. In Nitrobacter hamburgensis (strain DSM 10229 / NCIMB 13809 / X14), this protein is Glutamine--tRNA ligase.